A 225-amino-acid polypeptide reads, in one-letter code: MDFAELLESKAFTRTRLPLSKPIVVHAVAGAGKTSLLENYARINPAARIYTPIAQQSNSLLLSPFTQSLEQADIVDEYPLSTLHPGVEYVLADPIQYLGSKDLLKPHYICPTTHRFGHSTAEFLTSLGIETYAHKPDRLTIANIFKTEPHGQVIACDLDTQQLAARHSLDYLRPCQSIGKTFKDTTILISHELNRDTLTKEIYIALTRHTNSVTILTPDAPSTSS.

Residues 1–110 enclose the (+)RNA virus helicase ATP-binding domain; sequence MDFAELLESK…KDLLKPHYIC (110 aa). The (+)RNA virus helicase C-terminal domain occupies 111–225; that stretch reads PTTHRFGHST…LTPDAPSTSS (115 aa).

The protein belongs to the Tymovirales TGBp1 protein family. Homodimer and homooligomer. Interacts with capsid protein. Interacts with host AGO1; this interaction targets the host protein for degradation, thereby suppressing the antiviral RNA silencing.

The protein resides in the host cytoplasm. Functionally, transports viral genome to neighboring plant cells directly through plasmosdesmata, without any budding. The movement protein allows efficient cell to cell propagation, by bypassing the host cell wall barrier. Increases plasmodesma size exclusion limit. Acts as a suppressor of RNA-mediated gene silencing, also known as post-transcriptional gene silencing (PTGS), a mechanism of plant viral defense that limits the accumulation of viral RNAs. The protein is Movement and silencing protein TGBp1 of Citrus (ICRSV).